Consider the following 727-residue polypeptide: E3 ubiquitin-protein ligase LRSAM1 (727 aa).

LRR repeat units lie at residues 30–51 (ADDI…AFAT), 56–77 (QKKV…SCSL), 82–103 (TIKV…MGQL), 105–126 (VLQV…IGNL), 128–150 (QLQT…GELR), and 151–172 (SLRT…LAHV). The segment at 227-248 (GAENTQDSPDGPASRFSREEAE) is disordered. Ser-234 is subject to Phosphoserine. Coiled-coil stretches lie at residues 241-382 (RFSR…NLRQ) and 469-547 (RQIR…QENY). The SAM domain maps to 569–632 (GMERRLVALL…LRRAQDLLAV (64 aa)). Ser-604 is modified (phosphoserine). Short sequence motifs (PTAP motif) lie at residues 653–656 (PTAP) and 665–668 (PSAP). The RING-type zinc finger occupies 679 to 714 (CVVCLEREAQMVFLTCGHVCCCQQCCQPLRTCPLCR).

As to quaternary structure, interacts with TSG101. Interacts with PHF23. Interacts with FUS. Ubiquitination promoted by PHF23 leads to proteasomal degradation. As to expression, widely expressed.

Its subcellular location is the cytoplasm. It catalyses the reaction S-ubiquitinyl-[E2 ubiquitin-conjugating enzyme]-L-cysteine + [acceptor protein]-L-lysine = [E2 ubiquitin-conjugating enzyme]-L-cysteine + N(6)-ubiquitinyl-[acceptor protein]-L-lysine.. Its pathway is protein modification; protein ubiquitination. E3 ubiquitin-protein ligase that mediates monoubiquitination of TSG101 at multiple sites, leading to inactivate the ability of TSG101 to sort endocytic (EGF receptors) and exocytic (viral proteins) cargos. Bacterial recognition protein that defends the cytoplasm from invasive pathogens. Localizes to several intracellular bacterial pathogens and generates the bacteria-associated ubiquitin signal leading to autophagy-mediated intracellular bacteria degradation (xenophagy). This is E3 ubiquitin-protein ligase LRSAM1 from Mus musculus (Mouse).